The primary structure comprises 198 residues: GTP cyclohydrolase-2 (198 aa).

A GTP-binding site is contributed by 52–56 (RMHSE). Cysteine 57, cysteine 68, and cysteine 70 together coordinate Zn(2+). GTP-binding positions include glutamine 73, 94 to 96 (EGR), and threonine 116. Residue aspartate 128 is the Proton acceptor of the active site. The active-site Nucleophile is arginine 130. GTP contacts are provided by threonine 151 and lysine 156.

Belongs to the GTP cyclohydrolase II family. Zn(2+) serves as cofactor.

The enzyme catalyses GTP + 4 H2O = 2,5-diamino-6-hydroxy-4-(5-phosphoribosylamino)-pyrimidine + formate + 2 phosphate + 3 H(+). The protein operates within cofactor biosynthesis; riboflavin biosynthesis; 5-amino-6-(D-ribitylamino)uracil from GTP: step 1/4. Its function is as follows. Catalyzes the conversion of GTP to 2,5-diamino-6-ribosylamino-4(3H)-pyrimidinone 5'-phosphate (DARP), formate and pyrophosphate. This Vibrio cholerae serotype O1 (strain ATCC 39315 / El Tor Inaba N16961) protein is GTP cyclohydrolase-2.